The chain runs to 212 residues: Histidine biosynthesis bifunctional protein HisIE (212 aa).

Positions 1–109 (MRPDFHKQEL…ELIPFDDSDI (109 aa)) are phosphoribosyl-AMP cyclohydrolase. The interval 110 to 212 (FSELEKQIID…KKEFHTRTAD (103 aa)) is phosphoribosyl-ATP pyrophosphohydrolase.

This sequence in the N-terminal section; belongs to the PRA-CH family. In the C-terminal section; belongs to the PRA-PH family.

It is found in the cytoplasm. The catalysed reaction is 1-(5-phospho-beta-D-ribosyl)-ATP + H2O = 1-(5-phospho-beta-D-ribosyl)-5'-AMP + diphosphate + H(+). The enzyme catalyses 1-(5-phospho-beta-D-ribosyl)-5'-AMP + H2O = 1-(5-phospho-beta-D-ribosyl)-5-[(5-phospho-beta-D-ribosylamino)methylideneamino]imidazole-4-carboxamide. The protein operates within amino-acid biosynthesis; L-histidine biosynthesis; L-histidine from 5-phospho-alpha-D-ribose 1-diphosphate: step 2/9. It functions in the pathway amino-acid biosynthesis; L-histidine biosynthesis; L-histidine from 5-phospho-alpha-D-ribose 1-diphosphate: step 3/9. In Lactococcus lactis subsp. lactis (strain IL1403) (Streptococcus lactis), this protein is Histidine biosynthesis bifunctional protein HisIE (hisI).